We begin with the raw amino-acid sequence, 111 residues long: Rhodanese domain-containing protein CG4456 (111 aa).

Residues 12 to 110 (NHPDVYLIDV…SWNEWAQKEG (99 aa)) enclose the Rhodanese domain.

The polypeptide is Rhodanese domain-containing protein CG4456 (Drosophila melanogaster (Fruit fly)).